The chain runs to 454 residues: Protein odr-4 homolog (454 aa).

Helical transmembrane passes span 82-102 (MLPG…ELAN) and 432-452 (IGVI…FHYF).

Belongs to the ODR-4 family.

Its subcellular location is the membrane. Its function is as follows. May play a role in the trafficking of a subset of G-protein coupled receptors. This Pongo abelii (Sumatran orangutan) protein is Protein odr-4 homolog (ODR4).